The primary structure comprises 1280 residues: Rho guanine nucleotide exchange factor 10-like protein (1280 aa).

The span at 1–10 (MASSNPPPQP) shows a compositional bias: pro residues. The segment at 1–94 (MASSNPPPQP…TEAPTVVSNG (94 aa)) is disordered. Residues 26 to 46 (EVEEDSGEAFEFDDSDEEEDT) show a composition bias toward acidic residues. Residue Ser40 is modified to Phosphoserine. Positions 78–89 (PAAAPPQTEAPT) are enriched in low complexity. A phosphotyrosine mark is found at Tyr131 and Tyr152. The disordered stretch occupies residues 161-202 (PRETEDLGWSSSEFESYSEDSGEETKPEAEPTKHRGSFQPKL). Basic and acidic residues predominate over residues 183-193 (EETKPEAEPTK). A Phosphoserine modification is found at Ser279. One can recognise a DH domain in the interval 314 to 501 (VRRHILGSIV…ETLAEKLNEQ (188 aa)). 2 disordered regions span residues 1133–1163 (QEEAEGPQAEEDKPDGQAHETVPGPDSHTAR) and 1186–1207 (PLLSVREPAPADGSALEHSEED).

As to quaternary structure, interacts with RHOA, RHOB and RHOC.

It is found in the cytoplasm. In terms of biological role, acts as a guanine nucleotide exchange factor (GEF) for RHOA, RHOB and RHOC. This is Rho guanine nucleotide exchange factor 10-like protein (Arhgef10l) from Mus musculus (Mouse).